The sequence spans 541 residues: Glycogen synthase (541 aa).

Lys17 serves as a coordination point for ADP-alpha-D-glucose. Residues 497 to 541 form a disordered region; the sequence is LARPASPPDTAPVGKPARRRRTTALSTTARAHPVARAAGREKIRA.

The protein belongs to the glycosyltransferase 1 family. Bacterial/plant glycogen synthase subfamily.

It carries out the reaction [(1-&gt;4)-alpha-D-glucosyl](n) + ADP-alpha-D-glucose = [(1-&gt;4)-alpha-D-glucosyl](n+1) + ADP + H(+). The protein operates within glycan biosynthesis; glycogen biosynthesis. In terms of biological role, synthesizes alpha-1,4-glucan chains using ADP-glucose. This chain is Glycogen synthase, found in Ralstonia nicotianae (strain ATCC BAA-1114 / GMI1000) (Ralstonia solanacearum).